Consider the following 163-residue polypeptide: Nucleotide-binding protein MAP_4063c (163 aa).

It belongs to the YajQ family.

Nucleotide-binding protein. This is Nucleotide-binding protein MAP_4063c from Mycolicibacterium paratuberculosis (strain ATCC BAA-968 / K-10) (Mycobacterium paratuberculosis).